The chain runs to 293 residues: Small ribosomal subunit biogenesis GTPase RsgA (293 aa).

The CP-type G domain maps to 63 to 223 (KNWLVRPPIA…VADTPGFSAL (161 aa)). GTP-binding positions include 112–115 (NKMD) and 166–174 (GQSGVGKSS). Residues Cys-247, Cys-252, His-254, and Cys-260 each contribute to the Zn(2+) site.

Belongs to the TRAFAC class YlqF/YawG GTPase family. RsgA subfamily. In terms of assembly, monomer. Associates with 30S ribosomal subunit, binds 16S rRNA. Zn(2+) is required as a cofactor.

Its subcellular location is the cytoplasm. Its function is as follows. One of several proteins that assist in the late maturation steps of the functional core of the 30S ribosomal subunit. Helps release RbfA from mature subunits. May play a role in the assembly of ribosomal proteins into the subunit. Circularly permuted GTPase that catalyzes slow GTP hydrolysis, GTPase activity is stimulated by the 30S ribosomal subunit. This chain is Small ribosomal subunit biogenesis GTPase RsgA, found in Geobacillus sp. (strain WCH70).